The chain runs to 173 residues: CDP-archaeol synthase (173 aa).

5 consecutive transmembrane segments (helical) span residues 15-35 (GLWF…FGGG), 59-79 (GFIV…LVVG), 84-104 (AGDG…GSFV), 118-138 (VLDQ…VYGW), and 142-162 (GWVL…TNVI).

The protein belongs to the CDP-archaeol synthase family. Mg(2+) is required as a cofactor.

Its subcellular location is the cell membrane. The catalysed reaction is 2,3-bis-O-(geranylgeranyl)-sn-glycerol 1-phosphate + CTP + H(+) = CDP-2,3-bis-O-(geranylgeranyl)-sn-glycerol + diphosphate. Its pathway is membrane lipid metabolism; glycerophospholipid metabolism. Functionally, catalyzes the formation of CDP-2,3-bis-(O-geranylgeranyl)-sn-glycerol (CDP-archaeol) from 2,3-bis-(O-geranylgeranyl)-sn-glycerol 1-phosphate (DGGGP) and CTP. This reaction is the third ether-bond-formation step in the biosynthesis of archaeal membrane lipids. This chain is CDP-archaeol synthase, found in Methanopyrus kandleri (strain AV19 / DSM 6324 / JCM 9639 / NBRC 100938).